The primary structure comprises 433 residues: Histone acetyltransferase type B subunit 2 (433 aa).

WD repeat units lie at residues 134–174 (NHDG…NTPS), 187–227 (GQHK…KPNN), 237–277 (GHTA…SAPK), 282–322 (AHTG…VKLH), and 326–366 (SHTD…QEQT). The tract at residues 368 to 372 (DDAED) is interaction with the histone H4 N-terminus. A WD 6 repeat occupies 383–433 (GHTSRPTDLAWSPHMEWALTSAAEDNIVMVWRPSKAVIDTGNEELTPDDLE).

The protein belongs to the WD repeat RBAP46/RBAP48/MSI1 family. As to quaternary structure, component of the HAT-B complex composed of at least HAT1 and HAT2. The HAT-B complex binds to histone H4 tail.

It localises to the cytoplasm. It is found in the nucleus. Its function is as follows. Regulatory subunit of the histone acetylase B (HAT-B) complex. The complex acetylates 'Lys-12' of histone H4 which is required for telomeric silencing. In Mycosarcoma maydis (Corn smut fungus), this protein is Histone acetyltransferase type B subunit 2 (HAT2).